A 251-amino-acid polypeptide reads, in one-letter code: Pyrroloquinoline-quinone synthase (251 aa).

The protein belongs to the PqqC family.

The enzyme catalyses 6-(2-amino-2-carboxyethyl)-7,8-dioxo-1,2,3,4,7,8-hexahydroquinoline-2,4-dicarboxylate + 3 O2 = pyrroloquinoline quinone + 2 H2O2 + 2 H2O + H(+). It functions in the pathway cofactor biosynthesis; pyrroloquinoline quinone biosynthesis. Its function is as follows. Ring cyclization and eight-electron oxidation of 3a-(2-amino-2-carboxyethyl)-4,5-dioxo-4,5,6,7,8,9-hexahydroquinoline-7,9-dicarboxylic-acid to PQQ. This is Pyrroloquinoline-quinone synthase from Pseudomonas putida (strain ATCC 700007 / DSM 6899 / JCM 31910 / BCRC 17059 / LMG 24140 / F1).